The chain runs to 303 residues: UDP-N-acetylenolpyruvoylglucosamine reductase (303 aa).

The FAD-binding PCMH-type domain occupies 32–212 (IGGKADLFLN…EQETKEYLAK (181 aa)). Residue R176 is part of the active site. S226 serves as the catalytic Proton donor. E296 is an active-site residue.

The protein belongs to the MurB family. It depends on FAD as a cofactor.

Its subcellular location is the cytoplasm. The catalysed reaction is UDP-N-acetyl-alpha-D-muramate + NADP(+) = UDP-N-acetyl-3-O-(1-carboxyvinyl)-alpha-D-glucosamine + NADPH + H(+). It functions in the pathway cell wall biogenesis; peptidoglycan biosynthesis. Functionally, cell wall formation. This Desulforamulus reducens (strain ATCC BAA-1160 / DSM 100696 / MI-1) (Desulfotomaculum reducens) protein is UDP-N-acetylenolpyruvoylglucosamine reductase.